The following is a 116-amino-acid chain: NADH-ubiquinone oxidoreductase chain 3 (116 aa).

3 consecutive transmembrane segments (helical) span residues Leu-3–Phe-23, Phe-56–Leu-76, and Gly-87–Trp-107.

Belongs to the complex I subunit 3 family.

Its subcellular location is the mitochondrion membrane. It carries out the reaction a ubiquinone + NADH + 5 H(+)(in) = a ubiquinol + NAD(+) + 4 H(+)(out). Its function is as follows. Core subunit of the mitochondrial membrane respiratory chain NADH dehydrogenase (Complex I) that is believed to belong to the minimal assembly required for catalysis. Complex I functions in the transfer of electrons from NADH to the respiratory chain. The immediate electron acceptor for the enzyme is believed to be ubiquinone. This is NADH-ubiquinone oxidoreductase chain 3 (MT-ND3) from Carassius auratus (Goldfish).